Here is a 256-residue protein sequence, read N- to C-terminus: Fibroblast growth factor 3 (256 aa).

An N-terminal signal peptide occupies residues 1 to 18 (MVIILLLLLLSFLDPSLE). Disordered stretches follow at residues 31 to 54 (APCARGQACDPRQRRDAGGRGGVY), 151 to 176 (RHHATTQPPPTGSGIGGSKRRASSKR), and 219 to 256 (LRESQRHHTGSHRAPVGRAERRRRRHRGSKGHNRRADI). Over residues 238–256 (ERRRRRHRGSKGHNRRADI) the composition is skewed to basic residues.

Belongs to the heparin-binding growth factors family.

The protein localises to the secreted. Functionally, plays an important role in the regulation of embryonic development, cell proliferation, and cell differentiation. The polypeptide is Fibroblast growth factor 3 (fgf3) (Danio rerio (Zebrafish)).